We begin with the raw amino-acid sequence, 571 residues long: Sulfite reductase [NADPH] hemoprotein beta-component (571 aa).

The [4Fe-4S] cluster site is built by Cys-435, Cys-441, Cys-480, and Cys-484. Residue Cys-484 coordinates siroheme.

The protein belongs to the nitrite and sulfite reductase 4Fe-4S domain family. Alpha(8)-beta(8). The alpha component is a flavoprotein, the beta component is a hemoprotein. It depends on siroheme as a cofactor. [4Fe-4S] cluster is required as a cofactor.

It catalyses the reaction hydrogen sulfide + 3 NADP(+) + 3 H2O = sulfite + 3 NADPH + 4 H(+). The protein operates within sulfur metabolism; hydrogen sulfide biosynthesis; hydrogen sulfide from sulfite (NADPH route): step 1/1. In terms of biological role, component of the sulfite reductase complex that catalyzes the 6-electron reduction of sulfite to sulfide. This is one of several activities required for the biosynthesis of L-cysteine from sulfate. In Erwinia tasmaniensis (strain DSM 17950 / CFBP 7177 / CIP 109463 / NCPPB 4357 / Et1/99), this protein is Sulfite reductase [NADPH] hemoprotein beta-component.